The chain runs to 772 residues: 1,4-alpha-glucan branching enzyme GlgB (772 aa).

Aspartate 431 acts as the Nucleophile in catalysis. The Proton donor role is filled by glutamate 484.

The protein belongs to the glycosyl hydrolase 13 family. GlgB subfamily. Monomer.

It catalyses the reaction Transfers a segment of a (1-&gt;4)-alpha-D-glucan chain to a primary hydroxy group in a similar glucan chain.. The protein operates within glycan biosynthesis; glycogen biosynthesis. Its function is as follows. Catalyzes the formation of the alpha-1,6-glucosidic linkages in glycogen by scission of a 1,4-alpha-linked oligosaccharide from growing alpha-1,4-glucan chains and the subsequent attachment of the oligosaccharide to the alpha-1,6 position. This Synechococcus sp. (strain RCC307) protein is 1,4-alpha-glucan branching enzyme GlgB.